The following is a 316-amino-acid chain: Biotin synthase (316 aa).

The 227-residue stretch at 42-268 (LCGESVDLCT…INPTAYIRMA (227 aa)) folds into the Radical SAM core domain. [4Fe-4S] cluster is bound by residues Cys-60, Cys-64, and Cys-67. [2Fe-2S] cluster is bound by residues Ser-104, Cys-136, Cys-196, and Arg-266.

Belongs to the radical SAM superfamily. Biotin synthase family. In terms of assembly, homodimer. Requires [4Fe-4S] cluster as cofactor. The cofactor is [2Fe-2S] cluster.

The enzyme catalyses (4R,5S)-dethiobiotin + (sulfur carrier)-SH + 2 reduced [2Fe-2S]-[ferredoxin] + 2 S-adenosyl-L-methionine = (sulfur carrier)-H + biotin + 2 5'-deoxyadenosine + 2 L-methionine + 2 oxidized [2Fe-2S]-[ferredoxin]. Its pathway is cofactor biosynthesis; biotin biosynthesis; biotin from 7,8-diaminononanoate: step 2/2. Functionally, catalyzes the conversion of dethiobiotin (DTB) to biotin by the insertion of a sulfur atom into dethiobiotin via a radical-based mechanism. In Clostridium beijerinckii (strain ATCC 51743 / NCIMB 8052) (Clostridium acetobutylicum), this protein is Biotin synthase.